Consider the following 93-residue polypeptide: UPF0367 protein tsr0804 (93 aa).

The protein belongs to the UPF0367 family.

The chain is UPF0367 protein tsr0804 from Thermosynechococcus vestitus (strain NIES-2133 / IAM M-273 / BP-1).